The chain runs to 256 residues: Ribonuclease 3 (256 aa).

The region spanning 3 to 125 (LDALQQRLGY…IVGAVFLDAG (123 aa)) is the RNase III domain. Residue E38 coordinates Mg(2+). D42 is an active-site residue. Residues D111 and E114 each contribute to the Mg(2+) site. E114 is a catalytic residue. The region spanning 152–222 (DAKTLLQEYL…AKLALDEVQK (71 aa)) is the DRBM domain. Residues 230-256 (RSRAERTGKTRKQPVPQDPQLSLRLKE) form a disordered region.

Belongs to the ribonuclease III family. Homodimer. Mg(2+) serves as cofactor.

The protein resides in the cytoplasm. It catalyses the reaction Endonucleolytic cleavage to 5'-phosphomonoester.. Its function is as follows. Digests double-stranded RNA. Involved in the processing of primary rRNA transcript to yield the immediate precursors to the large and small rRNAs (23S and 16S). Processes some mRNAs, and tRNAs when they are encoded in the rRNA operon. Processes pre-crRNA and tracrRNA of type II CRISPR loci if present in the organism. The chain is Ribonuclease 3 from Cupriavidus necator (strain ATCC 17699 / DSM 428 / KCTC 22496 / NCIMB 10442 / H16 / Stanier 337) (Ralstonia eutropha).